A 790-amino-acid chain; its full sequence is Disintegrin and metalloproteinase domain-containing protein 30 (790 aa).

The N-terminal stretch at 1-27 (MRSVQIFLSQCRLLLLLVPTMLLKSLG) is a signal peptide. The propeptide occupies 28-198 (EDVIFHPEGE…KARLRDFPGS (171 aa)). The short motif at 170 to 177 (QVCGLSDD) is the Cysteine switch element. C172 contacts Zn(2+). At 199 to 687 (YKHPKYLELI…LRGAIPSSIW (489 aa)) the chain is on the extracellular side. The Peptidase M12B domain maps to 203-393 (KYLELILLFD…SGATCLNNIP (191 aa)). N-linked (GlcNAc...) asparagine glycosylation is present at N222. 3 disulfide bridges follow: C313–C388, C353–C373, and C355–C361. Zn(2+) is bound at residue H338. E339 is an active-site residue. Residues H342 and H348 each contribute to the Zn(2+) site. N-linked (GlcNAc...) asparagine glycans are attached at residues N372, N438, N473, and N625. Residues 399–485 (LKRCGNKIVE…SCPNDVYKQD (87 aa)) form the Disintegrin domain. C457 and C477 are oxidised to a cystine. Residues 629–663 (LQFDCLPEKCNTRGVCNNRKNCHCMYGWAPPFCEE) form the EGF-like domain. 3 disulfide bridges follow: C633–C644, C638–C650, and C652–C661. A helical transmembrane segment spans residues 688 to 708 (VVSIIMFRLILLILSVVFVFF). Residues 709-790 (RQVIGNHLKP…KAKSVKKQKK (82 aa)) are Cytoplasmic-facing. Over residues 720 to 779 (QEKMPLSKAKTEQEESKTKTVQEESKTKTGQEESEAKTGQEESKAKTGQEESKANIESKR) the composition is skewed to basic and acidic residues. Positions 720–790 (QEKMPLSKAK…KAKSVKKQKK (71 aa)) are disordered. 5 tandem repeats follow at residues 732-740 (QEESKTKTV), 741-749 (QEESKTKTG), 750-758 (QEESEAKTG), 759-767 (QEESKAKTG), and 768-776 (QEESKANIE). The tract at residues 732–776 (QEESKTKTVQEESKTKTGQEESEAKTGQEESKAKTGQEESKANIE) is 5 X 9 AA approximate repeats. Residues 780-790 (PKAKSVKKQKK) show a composition bias toward basic residues.

Interacts with CTSD; this leads to activation of CTSD. Zn(2+) serves as cofactor. In terms of tissue distribution, expressed in brain neurons (at protein level). Expressed in testis.

It localises to the late endosome membrane. Its function is as follows. Plays a role in lysosomal amyloid precursor protein (APP) processing by cleaving and activating CTSD/cathepsin D which leads to APP degradation. The sequence is that of Disintegrin and metalloproteinase domain-containing protein 30 (ADAM30) from Homo sapiens (Human).